We begin with the raw amino-acid sequence, 355 residues long: BAG family molecular chaperone regulator 1 (355 aa).

The disordered stretch occupies residues 1-112 (MAGRSAARRP…KNVTGTQVEE (112 aa)). Basic and acidic residues predominate over residues 26-39 (PAREPRQSESRAER). Composition is skewed to polar residues over residues 80 to 91 (SSQSEKVGSSSR) and 102 to 111 (SKNVTGTQVE). 7 consecutive repeat copies span residues 103–108 (KNVTGT), 111–116 (EEVTKI), 117–122 (EEATQT), 123–128 (EEVTVA), 129–134 (EEVTQT), 141–146 (EEMVQT), and 147–152 (EEMETP). Positions 111 to 209 (EEVTKIEEAT…LIFKGKSLKE (99 aa)) are 7 X 6 AA tandem repeat of E-E-X(4). The tract at residues 132-151 (TQTDNMAKTEEMVQTEEMET) is disordered. Positions 154–234 (LSVIVTHSNE…VMLIGEKSNP (81 aa)) constitute a Ubiquitin-like domain. The tract at residues 182 to 229 (DLAQLVEEATGVPLPFQKLIFKGKSLKEMETPLSALGMQNGCRVMLIG) is interaction with HSPA8. Residues 226-355 (MLIGEKSNPE…LQSTNLALAE (130 aa)) are interaction with PPP1R15A. The 81-residue stretch at 256–336 (HLQELNKELS…VFLAECDTVE (81 aa)) folds into the BAG domain.

Homodimer. Forms a heteromeric complex with HSP70/HSC70. Binds to the ATPase domain of HSP/HSC70 chaperones. Interacts with NR3C1. Interacts with the N-terminal region of MAPRE2. Interacts with PPP1R15A. Interacts with BCL2 in an ATP-dependent manner. Interacts with SIAH1, HSPA8 (via NBD), HSPA1A (via NBD) and HSPA1B (via NBD). Interacts with SIAH2. Interacts with ESR1; the interaction is promoted in the absence of estradiol (17-beta-estradiol/E2). Post-translationally, ubiquitinated; mediated by SIAH1 or SIAH2 and leading to its subsequent proteasomal degradation. Isoform 2 is expressed in the heart, lung, kidney and spinal cord. Isoform 1 and isoform 2 are expressed in hematopoietic cell lines. The levels of isoform 2 are relatively constant in all the cell lines examined while the levels of isoform 1 are more variable (at protein level). Isoform 1 is expressed in the lung and kidney. Isoform 2 is expressed in various tissues, with highest levels in testis and stomach.

Its subcellular location is the nucleus. The protein localises to the cytoplasm. In terms of biological role, co-chaperone for HSP70 and HSC70 chaperone proteins. Acts as a nucleotide-exchange factor (NEF) promoting the release of ADP from the HSP70 and HSC70 proteins thereby triggering client/substrate protein release. Nucleotide release is mediated via its binding to the nucleotide-binding domain (NBD) of HSPA8/HSC70 where as the substrate release is mediated via its binding to the substrate-binding domain (SBD) of HSPA8/HSC70. Inhibits the pro-apoptotic function of PPP1R15A, and has anti-apoptotic activity. Markedly increases the anti-cell death function of BCL2 induced by various stimuli. Involved in the STUB1-mediated proteasomal degradation of ESR1 in response to age-related circulating estradiol (17-beta-estradiol/E2) decline, thereby promotes neuronal apoptosis in response to ischemic reperfusion injury. The polypeptide is BAG family molecular chaperone regulator 1 (Bag1) (Mus musculus (Mouse)).